The chain runs to 369 residues: Putative FAD-dependent oxidoreductase LodB (369 aa).

FAD-binding positions include 10–14 and Arg-103; that span reads GGGPA.

FAD is required as a cofactor.

It localises to the cytoplasm. Is required for lysine-epsilon oxidase (LOD) activity in M.mediterranea. May be involved in the generation of the quinonic cofactor of LodA, leading to the active form of LodA containing a tyrosine-derived quinone cofactor. The sequence is that of Putative FAD-dependent oxidoreductase LodB (lodB) from Marinomonas mediterranea (strain ATCC 700492 / JCM 21426 / NBRC 103028 / MMB-1).